Consider the following 106-residue polypeptide: UPF0235 protein OCAR_4310/OCA5_c02140 (106 aa).

Belongs to the UPF0235 family.

The sequence is that of UPF0235 protein OCAR_4310/OCA5_c02140 from Afipia carboxidovorans (strain ATCC 49405 / DSM 1227 / KCTC 32145 / OM5) (Oligotropha carboxidovorans).